The chain runs to 475 residues: ATP synthase subunit beta 1 (475 aa).

153–160 (GGAGVGKT) serves as a coordination point for ATP.

This sequence belongs to the ATPase alpha/beta chains family. In terms of assembly, F-type ATPases have 2 components, CF(1) - the catalytic core - and CF(0) - the membrane proton channel. CF(1) has five subunits: alpha(3), beta(3), gamma(1), delta(1), epsilon(1). CF(0) has three main subunits: a(1), b(2) and c(9-12). The alpha and beta chains form an alternating ring which encloses part of the gamma chain. CF(1) is attached to CF(0) by a central stalk formed by the gamma and epsilon chains, while a peripheral stalk is formed by the delta and b chains.

It is found in the cell membrane. It carries out the reaction ATP + H2O + 4 H(+)(in) = ADP + phosphate + 5 H(+)(out). In terms of biological role, produces ATP from ADP in the presence of a proton gradient across the membrane. The catalytic sites are hosted primarily by the beta subunits. In Mycoplasmopsis pulmonis (strain UAB CTIP) (Mycoplasma pulmonis), this protein is ATP synthase subunit beta 1.